The sequence spans 278 residues: ATP-dependent dethiobiotin synthetase BioD 1 (278 aa).

51–56 (NVGKTI) provides a ligand contact to ATP. Thr-55 provides a ligand contact to Mg(2+). Lys-76 is a catalytic residue. Asp-102 contacts ATP. Residues Asp-102 and Glu-163 each contribute to the Mg(2+) site. ATP contacts are provided by residues 223-224 (NR) and 252-254 (PYI).

Belongs to the dethiobiotin synthetase family. Homodimer. Requires Mg(2+) as cofactor.

It is found in the cytoplasm. It catalyses the reaction (7R,8S)-7,8-diammoniononanoate + CO2 + ATP = (4R,5S)-dethiobiotin + ADP + phosphate + 3 H(+). Its pathway is cofactor biosynthesis; biotin biosynthesis; biotin from 7,8-diaminononanoate: step 1/2. Catalyzes a mechanistically unusual reaction, the ATP-dependent insertion of CO2 between the N7 and N8 nitrogen atoms of 7,8-diaminopelargonic acid (DAPA, also called 7,8-diammoniononanoate) to form a ureido ring. The chain is ATP-dependent dethiobiotin synthetase BioD 1 from Haemophilus ducreyi (strain 35000HP / ATCC 700724).